Reading from the N-terminus, the 231-residue chain is Large ribosomal subunit protein uL1 (231 aa).

The protein belongs to the universal ribosomal protein uL1 family. Part of the 50S ribosomal subunit.

Its function is as follows. Binds directly to 23S rRNA. The L1 stalk is quite mobile in the ribosome, and is involved in E site tRNA release. Protein L1 is also a translational repressor protein, it controls the translation of the L11 operon by binding to its mRNA. This chain is Large ribosomal subunit protein uL1, found in Nitrosomonas eutropha (strain DSM 101675 / C91 / Nm57).